An 818-amino-acid polypeptide reads, in one-letter code: IQ and AAA domain-containing protein 1-like (818 aa).

Residues Gln206 to Glu235 form the IQ domain. Disordered stretches follow at residues Gln344–Gly377 and Glu458–Thr482. The span at Arg463 to Lys476 shows a compositional bias: basic residues. Gly567 to Lys574 serves as a coordination point for ATP. Residues Ser795–Lys818 are disordered. Over residues His798–Lys818 the composition is skewed to basic and acidic residues.

This sequence belongs to the AAA ATPase family.

This chain is IQ and AAA domain-containing protein 1-like (IQCA1L), found in Homo sapiens (Human).